Here is a 43-residue protein sequence, read N- to C-terminus: Defensin (43 aa).

Disulfide bonds link cysteine 3–cysteine 34, cysteine 20–cysteine 39, and cysteine 24–cysteine 41.

The protein belongs to the invertebrate defensin family. Type 1 subfamily.

The protein resides in the secreted. In terms of biological role, antibacterial peptide. Affects Gram-positive bacteria M.luteus, B.megaterium, A.viridans, S.aureus and S.saprophyticus. Moderate activity against P.acidilactici and B.subtilis QB935. Also affects Gram-negative bacterium, D22 form of E.coli. The polypeptide is Defensin (Pyrrhocoris apterus (Sap sucking bug)).